The following is a 159-amino-acid chain: 2-C-methyl-D-erythritol 2,4-cyclodiphosphate synthase (159 aa).

A divalent metal cation is bound by residues Asp-11 and His-13. Residues 11 to 13 (DVH) and 37 to 38 (HS) contribute to the 4-CDP-2-C-methyl-D-erythritol 2-phosphate site. His-45 serves as a coordination point for a divalent metal cation. 4-CDP-2-C-methyl-D-erythritol 2-phosphate contacts are provided by residues 59 to 61 (DIG) and 64 to 68 (FPDSD).

It belongs to the IspF family. As to quaternary structure, homotrimer. A divalent metal cation is required as a cofactor.

The enzyme catalyses 4-CDP-2-C-methyl-D-erythritol 2-phosphate = 2-C-methyl-D-erythritol 2,4-cyclic diphosphate + CMP. Its pathway is isoprenoid biosynthesis; isopentenyl diphosphate biosynthesis via DXP pathway; isopentenyl diphosphate from 1-deoxy-D-xylulose 5-phosphate: step 4/6. Functionally, involved in the biosynthesis of isopentenyl diphosphate (IPP) and dimethylallyl diphosphate (DMAPP), two major building blocks of isoprenoid compounds. Catalyzes the conversion of 4-diphosphocytidyl-2-C-methyl-D-erythritol 2-phosphate (CDP-ME2P) to 2-C-methyl-D-erythritol 2,4-cyclodiphosphate (ME-CPP) with a corresponding release of cytidine 5-monophosphate (CMP). The sequence is that of 2-C-methyl-D-erythritol 2,4-cyclodiphosphate synthase from Solibacter usitatus (strain Ellin6076).